The chain runs to 834 residues: Phenylalanine--tRNA ligase beta subunit (834 aa).

Residues 48–159 enclose the tRNA-binding domain; it reads GDIERPLVVG…GTAEPGTDAN (112 aa). Residues 411-492 enclose the B5 domain; it reads PAPEPIRMDI…RLEGLEQIPS (82 aa). Residues aspartate 470, aspartate 476, glutamate 479, and glutamate 480 each contribute to the Mg(2+) site. The FDX-ACB domain maps to 740 to 833; sequence SPFPAVLQDV…AADAVGAVLR (94 aa).

The protein belongs to the phenylalanyl-tRNA synthetase beta subunit family. Type 1 subfamily. Tetramer of two alpha and two beta subunits. Mg(2+) is required as a cofactor.

Its subcellular location is the cytoplasm. The catalysed reaction is tRNA(Phe) + L-phenylalanine + ATP = L-phenylalanyl-tRNA(Phe) + AMP + diphosphate + H(+). The sequence is that of Phenylalanine--tRNA ligase beta subunit from Nocardia farcinica (strain IFM 10152).